A 311-amino-acid chain; its full sequence is HPr kinase/phosphorylase (311 aa).

Catalysis depends on residues His139 and Lys160. Residue 154–161 (GESGVGKS) coordinates ATP. Residue Ser161 coordinates Mg(2+). Asp178 (proton acceptor; for phosphorylation activity. Proton donor; for dephosphorylation activity) is an active-site residue. The interval 202-211 (IEIRGIGILD) is important for the catalytic mechanism of both phosphorylation and dephosphorylation. Glu203 provides a ligand contact to Mg(2+). The active site involves Arg244. Residues 265–270 (PVRPGR) form an important for the catalytic mechanism of dephosphorylation region.

It belongs to the HPrK/P family. As to quaternary structure, homohexamer. It depends on Mg(2+) as a cofactor.

The enzyme catalyses [HPr protein]-L-serine + ATP = [HPr protein]-O-phospho-L-serine + ADP + H(+). It carries out the reaction [HPr protein]-O-phospho-L-serine + phosphate + H(+) = [HPr protein]-L-serine + diphosphate. Catalyzes the ATP- as well as the pyrophosphate-dependent phosphorylation of a specific serine residue in HPr, a phosphocarrier protein of the phosphoenolpyruvate-dependent sugar phosphotransferase system (PTS). HprK/P also catalyzes the pyrophosphate-producing, inorganic phosphate-dependent dephosphorylation (phosphorolysis) of seryl-phosphorylated HPr (P-Ser-HPr). The two antagonistic activities of HprK/P are regulated by several intracellular metabolites, which change their concentration in response to the absence or presence of rapidly metabolisable carbon sources (glucose, fructose, etc.) in the growth medium. Therefore, by controlling the phosphorylation state of HPr, HPrK/P is a sensor enzyme that plays a major role in the regulation of carbon metabolism and sugar transport: it mediates carbon catabolite repression (CCR), and regulates PTS-catalyzed carbohydrate uptake and inducer exclusion. The polypeptide is HPr kinase/phosphorylase (Caldicellulosiruptor bescii (strain ATCC BAA-1888 / DSM 6725 / KCTC 15123 / Z-1320) (Anaerocellum thermophilum)).